The primary structure comprises 313 residues: MPIPKAFALLGPTACGKTALALKIAETLPVEIISLDSALVYTGMDIGTAKPSASERAFVPHHLIDIITPVQTYSAARFVEDCTRLIGEITARGKCPLIVGGTMMYFRALTQGLNDLPEADACLRADLDEQKQMYGLDFLYRTLQKVDPETACRLKPNDSQRIERALEVYYLTGKPMSEHLGRQSPHTLPFDLHTAALIPENRARLHENIALRFHLMLEQGFIGEVENLRRRYPGLTADSPAIRCVGYRQAWEYLDGKTDFPAFVEKGIAATRQLAKRQLTWLRKTPLDCVADPFSDGTSCTRLIEAAKRFFGA.

Gly11–Thr18 serves as a coordination point for ATP. Residue Thr13–Thr18 participates in substrate binding. Interaction with substrate tRNA stretches follow at residues Asp36 to Leu39, Gln160 to Arg164, and Arg243 to Arg248.

Belongs to the IPP transferase family. In terms of assembly, monomer. Requires Mg(2+) as cofactor.

It catalyses the reaction adenosine(37) in tRNA + dimethylallyl diphosphate = N(6)-dimethylallyladenosine(37) in tRNA + diphosphate. In terms of biological role, catalyzes the transfer of a dimethylallyl group onto the adenine at position 37 in tRNAs that read codons beginning with uridine, leading to the formation of N6-(dimethylallyl)adenosine (i(6)A). The chain is tRNA dimethylallyltransferase from Neisseria meningitidis serogroup C (strain 053442).